Reading from the N-terminus, the 118-residue chain is Large ribosomal subunit protein bL20 (118 aa).

This sequence belongs to the bacterial ribosomal protein bL20 family.

Its function is as follows. Binds directly to 23S ribosomal RNA and is necessary for the in vitro assembly process of the 50S ribosomal subunit. It is not involved in the protein synthesizing functions of that subunit. This Desulfovibrio desulfuricans (strain ATCC 27774 / DSM 6949 / MB) protein is Large ribosomal subunit protein bL20.